The chain runs to 633 residues: Carbon catabolite-derepressing protein kinase (633 aa).

Low complexity predominate over residues 1 to 16 (MSSNNNTNTAPANANS). Positions 1 to 46 (MSSNNNTNTAPANANSSHHHHHHHHHHHHHGHGGSNSTLNNPKSSL) are disordered. A compositionally biased stretch (basic residues) spans 17 to 32 (SHHHHHHHHHHHHHGH). In terms of domain architecture, Protein kinase spans 55–306 (YQIVKTLGEG…IHEIMQDDWF (252 aa)). Residues 61–69 (LGEGSFGKV) and Lys84 each bind ATP. Residue Asp177 is the Proton acceptor of the active site. Thr210 is subject to Phosphothreonine; by autocatalysis. The interval 313-392 (YLLPPDLKPH…YMLIKENKSL (80 aa)) is auto-inhibitory domain (AID). A disordered region spans residues 317 to 345 (PDLKPHPEEENENNDSKKDGSSPDNDEID). The span at 319 to 337 (LKPHPEEENENNDSKKDGS) shows a compositional bias: basic and acidic residues. The 42-residue stretch at 348–389 (LVNILSSTMGYEKDEIYESLESSEDTPAFNEIRDAYMLIKEN) folds into the UBA domain. A disordered region spans residues 409–434 (FLSQSPPTFQQQSKSHQKSQVDHETA). The residue at position 413 (Ser413) is a Phosphoserine. Lys461 is covalently cross-linked (Glycyl lysine isopeptide (Lys-Gly) (interchain with G-Cter in ubiquitin)). Position 487 is a phosphoserine (Ser487). Lys549 participates in a covalent cross-link: Glycyl lysine isopeptide (Lys-Gly) (interchain with G-Cter in SUMO). Ser632 carries the post-translational modification Phosphoserine.

The protein belongs to the protein kinase superfamily. CAMK Ser/Thr protein kinase family. SNF1 subfamily. In terms of assembly, component of the AMP-activated protein kinase complex also known as the SNF1 kinase complex (Snf1c), a heterotrimeric complex composed of an alpha subunit (SNF1), a regulatory subunit beta (GAL83 and substoichiometric alternate beta subunits SIP1 and SIP2), and a regulatory subunit gamma (SNF4). Interacts with the transcriptional activator SIP4. Interacts with SAK1. Interacts with CTK1: Interacts with adenylate cyclase CYR1. In terms of processing, phosphorylation at Thr-210 in response to glucose limitation leads to activation of kinase activity. ADP, but not AMP, protects the enzyme from dephosphorylation at Thr-210 by GLC7. Post-translationally, sumoylation by the SUMO (E3) ligase MMS21 leads to inhibition by interaction of SUMO attached to Lys-549 with a SUMO-interacting sequence motif located near the active site of SNF1, and by targeting SNF1 for glucose-induced destruction via the SLX5-SLX8 (SUMO-directed) ubiquitin ligase.

The protein resides in the cytoplasm. It is found in the nucleus. The protein localises to the nucleus membrane. It carries out the reaction L-seryl-[protein] + ATP = O-phospho-L-seryl-[protein] + ADP + H(+). It catalyses the reaction L-threonyl-[protein] + ATP = O-phospho-L-threonyl-[protein] + ADP + H(+). With respect to regulation, the kinase activity is positively regulated by SNF4 via sequestration of the SNF1 auto-inhibitory domain (AID). Its function is as follows. Serine/threonine protein kinase essential for release from glucose repression. Catalytic subunit of the AMP-activated protein kinase complex also known as the SNF1 kinase complex (Snf1c), a central regulator of cellular energy homeostasis, which, in response to a fall in intracellular ATP levels, activates energy-producing pathways and inhibits energy-consuming processes. The complex phosphorylates histone H3 to form H3S10ph, which promotes H3K14ac formation, leading to transcriptional activation through TBP recruitment to the promoters. The complex also negatively regulates the HOG1 MAPK pathway in ER stress response including unfolded protein response (UPR). Under nutrient/energy depletion, the complex phosphorylates and activates PAS kinase PSK1 which in turn activates PBS1, leading to the inhibition of the TORC1 signaling pathway. SNF1 also interacts and phosphorylates adenylate cyclase CYR1 and negatively regulates the protein kinase A signaling pathway. Also phosphorylates and regulates the transcriptional activator CAT8. The polypeptide is Carbon catabolite-derepressing protein kinase (Saccharomyces cerevisiae (strain ATCC 204508 / S288c) (Baker's yeast)).